A 249-amino-acid chain; its full sequence is Triosephosphate isomerase (249 aa).

Asn-12 and Lys-14 together coordinate substrate. Lys-14 is subject to N6-acetyllysine. A 3'-nitrotyrosine modification is found at Tyr-68. Phosphoserine occurs at positions 80 and 106. Lys-142 participates in a covalent cross-link: Glycyl lysine isopeptide (Lys-Gly) (interchain with G-Cter in SUMO1). Lys-149 is modified (N6-succinyllysine). Residue Lys-156 is modified to N6-acetyllysine; alternate. At Lys-156 the chain carries N6-succinyllysine; alternate. A Phosphoserine modification is found at Ser-159. Glu-166 (proton acceptor) is an active-site residue. The residue at position 173 (Thr-173) is a Phosphothreonine. Lys-194 is subject to N6-acetyllysine; alternate. The residue at position 194 (Lys-194) is an N6-succinyllysine; alternate. N6-methyllysine; alternate is present on Lys-194. Ser-198 is subject to Phosphoserine. 3'-nitrotyrosine is present on Tyr-209. The residue at position 212 (Ser-212) is a Phosphoserine. At Thr-214 the chain carries Phosphothreonine. Ser-223 is subject to Phosphoserine. The residue at position 238 (Lys-238) is an N6-acetyllysine.

It belongs to the triosephosphate isomerase family. In terms of assembly, homodimer.

The protein resides in the cytoplasm. The enzyme catalyses D-glyceraldehyde 3-phosphate = dihydroxyacetone phosphate. It carries out the reaction dihydroxyacetone phosphate = methylglyoxal + phosphate. Its pathway is carbohydrate biosynthesis; gluconeogenesis. The protein operates within carbohydrate degradation; glycolysis; D-glyceraldehyde 3-phosphate from glycerone phosphate: step 1/1. In terms of biological role, triosephosphate isomerase is an extremely efficient metabolic enzyme that catalyzes the interconversion between dihydroxyacetone phosphate (DHAP) and D-glyceraldehyde-3-phosphate (G3P) in glycolysis and gluconeogenesis. It is also responsible for the non-negligible production of methylglyoxal a reactive cytotoxic side-product that modifies and can alter proteins, DNA and lipids. In Mesocricetus auratus (Golden hamster), this protein is Triosephosphate isomerase.